A 684-amino-acid chain; its full sequence is Glycine--tRNA ligase beta subunit (684 aa).

It belongs to the class-II aminoacyl-tRNA synthetase family. Tetramer of two alpha and two beta subunits.

The protein resides in the cytoplasm. It carries out the reaction tRNA(Gly) + glycine + ATP = glycyl-tRNA(Gly) + AMP + diphosphate. The polypeptide is Glycine--tRNA ligase beta subunit (Pseudomonas syringae pv. tomato (strain ATCC BAA-871 / DC3000)).